The sequence spans 488 residues: UDP-N-acetylmuramoyl-L-alanyl-D-glutamate--2,6-diaminopimelate ligase (488 aa).

UDP-N-acetyl-alpha-D-muramoyl-L-alanyl-D-glutamate is bound by residues Leu-24, Ser-26, and 41–43; that span reads HQV. Position 113 to 119 (113 to 119) interacts with ATP; the sequence is GTNGKTT. UDP-N-acetyl-alpha-D-muramoyl-L-alanyl-D-glutamate-binding positions include Asn-154, 155-156, Ser-182, Gln-188, and Arg-190; that span reads TT. N6-carboxylysine is present on Lys-222. Meso-2,6-diaminopimelate is bound by residues Arg-386, 410–413, Gly-461, and Glu-465; that span reads DNPR. The Meso-diaminopimelate recognition motif signature appears at 410 to 413; sequence DNPR.

Belongs to the MurCDEF family. MurE subfamily. It depends on Mg(2+) as a cofactor. Post-translationally, carboxylation is probably crucial for Mg(2+) binding and, consequently, for the gamma-phosphate positioning of ATP.

The protein localises to the cytoplasm. It catalyses the reaction UDP-N-acetyl-alpha-D-muramoyl-L-alanyl-D-glutamate + meso-2,6-diaminopimelate + ATP = UDP-N-acetyl-alpha-D-muramoyl-L-alanyl-gamma-D-glutamyl-meso-2,6-diaminopimelate + ADP + phosphate + H(+). Its pathway is cell wall biogenesis; peptidoglycan biosynthesis. In terms of biological role, catalyzes the addition of meso-diaminopimelic acid to the nucleotide precursor UDP-N-acetylmuramoyl-L-alanyl-D-glutamate (UMAG) in the biosynthesis of bacterial cell-wall peptidoglycan. The sequence is that of UDP-N-acetylmuramoyl-L-alanyl-D-glutamate--2,6-diaminopimelate ligase from Haemophilus influenzae (strain ATCC 51907 / DSM 11121 / KW20 / Rd).